The chain runs to 259 residues: NAD kinase (259 aa).

Asp43 serves as the catalytic Proton acceptor. NAD(+) contacts are provided by residues 43–44, 111–112, and Arg136; these read DG and NE.

It belongs to the NAD kinase family. Requires a divalent metal cation as cofactor.

Its subcellular location is the cytoplasm. It catalyses the reaction NAD(+) + ATP = ADP + NADP(+) + H(+). Involved in the regulation of the intracellular balance of NAD and NADP, and is a key enzyme in the biosynthesis of NADP. Catalyzes specifically the phosphorylation on 2'-hydroxyl of the adenosine moiety of NAD to yield NADP. The sequence is that of NAD kinase from Mycoplasma genitalium (strain ATCC 33530 / DSM 19775 / NCTC 10195 / G37) (Mycoplasmoides genitalium).